The primary structure comprises 214 residues: Insulin-like growth factor 2 (214 aa).

A b region spans residues 48–79 (EVASAETLCGGELVDALQFVCEDRGFYFSRPT). 3 disulfides stabilise this stretch: cysteine 56–cysteine 97, cysteine 68–cysteine 110, and cysteine 96–cysteine 101. Residues 80-90 (SRSNSRRSQNR) are c. The segment at 91–111 (GIVEECCFRSCDLNLLEQYCA) is a. The interval 112–117 (KPAKSE) is d. The propeptide at 118 to 214 (RDVSATSLQI…PPTDNYVSHN (97 aa)) is e peptide.

This sequence belongs to the insulin family.

It is found in the secreted. Functionally, the insulin-like growth factors, isolated from plasma, are structurally and functionally related to insulin but have a much higher growth-promoting activity. Acts as a ligand for integrin which is required for IGF2 signaling. The polypeptide is Insulin-like growth factor 2 (Oncorhynchus mykiss (Rainbow trout)).